Reading from the N-terminus, the 248-residue chain is PF03932 family protein CutC (248 aa).

It belongs to the CutC family. In terms of assembly, homodimer.

It localises to the cytoplasm. In Shigella boydii serotype 4 (strain Sb227), this protein is PF03932 family protein CutC.